Reading from the N-terminus, the 435-residue chain is Casein kinase 1-like protein 12 (435 aa).

The region spanning 9 to 278 (YRLGRKIGSG…LKRIFRDLFI (270 aa)) is the Protein kinase domain. Residues 15–23 (IGSGSFGEI) and K38 each bind ATP. Catalysis depends on D128, which acts as the Proton acceptor. Disordered regions lie at residues 313–363 (VGTS…RGPM) and 394–414 (LRNSPVVTTPEGKRSSSTRKH).

It belongs to the protein kinase superfamily. CK1 Ser/Thr protein kinase family. Casein kinase I subfamily. Monomer. Post-translationally, autophosphorylated.

The protein resides in the cytoplasm. It catalyses the reaction L-seryl-[protein] + ATP = O-phospho-L-seryl-[protein] + ADP + H(+). The catalysed reaction is L-threonyl-[protein] + ATP = O-phospho-L-threonyl-[protein] + ADP + H(+). Its function is as follows. Casein kinases are operationally defined by their preferential utilization of acidic proteins such as caseins as substrates. It can phosphorylate a large number of proteins. This chain is Casein kinase 1-like protein 12, found in Arabidopsis thaliana (Mouse-ear cress).